A 421-amino-acid polypeptide reads, in one-letter code: Gamma-glutamyl phosphate reductase (421 aa).

This sequence belongs to the gamma-glutamyl phosphate reductase family.

It is found in the cytoplasm. It carries out the reaction L-glutamate 5-semialdehyde + phosphate + NADP(+) = L-glutamyl 5-phosphate + NADPH + H(+). The protein operates within amino-acid biosynthesis; L-proline biosynthesis; L-glutamate 5-semialdehyde from L-glutamate: step 2/2. Catalyzes the NADPH-dependent reduction of L-glutamate 5-phosphate into L-glutamate 5-semialdehyde and phosphate. The product spontaneously undergoes cyclization to form 1-pyrroline-5-carboxylate. The polypeptide is Gamma-glutamyl phosphate reductase (Pseudomonas paraeruginosa (strain DSM 24068 / PA7) (Pseudomonas aeruginosa (strain PA7))).